A 186-amino-acid polypeptide reads, in one-letter code: Ribosomal RNA small subunit methyltransferase G (186 aa).

Residues Gly59, Phe64, 110–111, and Arg124 contribute to the S-adenosyl-L-methionine site; that span reads IE.

It belongs to the methyltransferase superfamily. RNA methyltransferase RsmG family.

The protein localises to the cytoplasm. It carries out the reaction guanosine(527) in 16S rRNA + S-adenosyl-L-methionine = N(7)-methylguanosine(527) in 16S rRNA + S-adenosyl-L-homocysteine. Its function is as follows. Specifically methylates the N7 position of guanine in position 527 of 16S rRNA. In Campylobacter curvus (strain 525.92), this protein is Ribosomal RNA small subunit methyltransferase G.